The following is a 505-amino-acid chain: ATP synthase subunit beta, mitochondrial (505 aa).

An ATP-binding site is contributed by 184-191 (GGAGVGKT).

This sequence belongs to the ATPase alpha/beta chains family. F-type ATPases have 2 components, CF(1) - the catalytic core - and CF(0) - the membrane proton channel. CF(1) has five subunits: alpha(3), beta(3), gamma(1), delta(1), epsilon(1). CF(0) has three main subunits: a, b and c.

It is found in the mitochondrion. The protein localises to the mitochondrion inner membrane. It carries out the reaction ATP + H2O + 4 H(+)(in) = ADP + phosphate + 5 H(+)(out). Functionally, mitochondrial membrane ATP synthase (F(1)F(0) ATP synthase or Complex V) produces ATP from ADP in the presence of a proton gradient across the membrane which is generated by electron transport complexes of the respiratory chain. F-type ATPases consist of two structural domains, F(1) - containing the extramembraneous catalytic core, and F(0) - containing the membrane proton channel, linked together by a central stalk and a peripheral stalk. During catalysis, ATP synthesis in the catalytic domain of F(1) is coupled via a rotary mechanism of the central stalk subunits to proton translocation. Subunits alpha and beta form the catalytic core in F(1). Rotation of the central stalk against the surrounding alpha(3)beta(3) subunits leads to hydrolysis of ATP in three separate catalytic sites on the beta subunits. The sequence is that of ATP synthase subunit beta, mitochondrial (ATP2) from Kluyveromyces lactis (strain ATCC 8585 / CBS 2359 / DSM 70799 / NBRC 1267 / NRRL Y-1140 / WM37) (Yeast).